We begin with the raw amino-acid sequence, 514 residues long: H/ACA ribonucleoprotein complex subunit DKC1 (514 aa).

An N-acetylalanine modification is found at alanine 2. The nucleolar localization stretch occupies residues 2–21 (ADAEVIILPKKHKKKKERKS). Lysine 20 is covalently cross-linked (Glycyl lysine isopeptide (Lys-Gly) (interchain with G-Cter in SUMO2)). Position 21 is a phosphoserine (serine 21). Residues lysine 39 and lysine 43 each participate in a glycyl lysine isopeptide (Lys-Gly) (interchain with G-Cter in SUMO2) cross-link. The active-site Nucleophile is the aspartate 125. Lysine 191 participates in a covalent cross-link: Glycyl lysine isopeptide (Lys-Gly) (interchain with G-Cter in SUMO2). The PUA domain maps to 296–371 (HKRLVMKDSA…IVAKIKRVIM (76 aa)). The residue at position 387 (serine 387) is a Phosphoserine. A Glycyl lysine isopeptide (Lys-Gly) (interchain with G-Cter in SUMO2) cross-link involves residue lysine 394. Residue lysine 413 forms a Glycyl lysine isopeptide (Lys-Gly) (interchain with G-Cter in SUMO1); alternate linkage. Lysine 413 participates in a covalent cross-link: Glycyl lysine isopeptide (Lys-Gly) (interchain with G-Cter in SUMO2); alternate. Residues lysine 424 and lysine 433 each participate in a glycyl lysine isopeptide (Lys-Gly) (interchain with G-Cter in SUMO2) cross-link. Residues 443–514 (KTAKRKRESE…KAKEVELVSE (72 aa)) are disordered. Residues 446–514 (KRKRESESES…KAKEVELVSE (69 aa)) are nuclear and nucleolar localization. Phosphoserine is present on residues serine 451, serine 453, and serine 455. A Phosphothreonine modification is found at threonine 458. Residue lysine 467 forms a Glycyl lysine isopeptide (Lys-Gly) (interchain with G-Cter in SUMO2) linkage. A compositionally biased stretch (basic residues) spans 468–480 (KEKKKSKKDKKAK). Phosphoserine is present on residues serine 485, serine 494, and serine 513.

Belongs to the pseudouridine synthase TruB family. Part of the H/ACA small nucleolar ribonucleoprotein (H/ACA snoRNP) complex, which contains NHP2/NOLA2, GAR1/NOLA1, NOP10/NOLA3, and DKC1/NOLA4, which is presumed to be the catalytic subunit. The complex contains a stable core formed by binding of one or two NOP10-DKC1 heterodimers to NHP2; GAR1 subsequently binds to this core via DKC1. The complex binds a box H/ACA small nucleolar RNA (snoRNA), which may target the specific site of modification within the RNA substrate. During assembly, the complex contains NAF1 instead of GAR1/NOLA1. The complex also interacts with TERC, which contains a 3'-terminal domain related to the box H/ACA snoRNAs. Specific interactions with snoRNAs or TERC are mediated by GAR1 and NHP2. Associates with NOLC1/NOPP140. H/ACA snoRNPs interact with the SMN complex, consisting of SMN1 or SMN2, GEMIN2/SIP1, DDX20/GEMIN3, and GEMIN4. This is mediated by interaction between GAR1 and SMN1 or SMN2. The SMN complex may be required for correct assembly of the H/ACA snoRNP complex. Component of the telomerase holoenzyme complex composed of one molecule of TERT, one molecule of WRAP53/TCAB1, two molecules of H/ACA ribonucleoprotein complex subunits DKC1, NOP10, NHP2 and GAR1, and a telomerase RNA template component (TERC). The telomerase holoenzyme complex is associated with TEP1, SMG6/EST1A and POT1. Interacts with SHQ1; this interaction may lead to the stabilization of DKC1, from the time of its synthesis until its association with NOP10, NHP2, and NAF1 at the nascent H/ACA RNA. Interacts with HMBOX1. Interacts with DHX36. Ubiquitously expressed.

It localises to the nucleus. It is found in the nucleolus. The protein resides in the cajal body. The protein localises to the cytoplasm. The catalysed reaction is uridine in 5S rRNA = pseudouridine in 5S rRNA. Functionally, catalytic subunit of H/ACA small nucleolar ribonucleoprotein (H/ACA snoRNP) complex, which catalyzes pseudouridylation of rRNA. This involves the isomerization of uridine such that the ribose is subsequently attached to C5, instead of the normal N1. Each rRNA can contain up to 100 pseudouridine ('psi') residues, which may serve to stabilize the conformation of rRNAs. Required for ribosome biogenesis and telomere maintenance. Also required for correct processing or intranuclear trafficking of TERC, the RNA component of the telomerase reverse transcriptase (TERT) holoenzyme. Its function is as follows. Promotes cell to cell and cell to substratum adhesion, increases the cell proliferation rate and leads to cytokeratin hyper-expression. This is H/ACA ribonucleoprotein complex subunit DKC1 from Homo sapiens (Human).